The following is an 809-amino-acid chain: Spindle pole body component alp14 (809 aa).

2 HEAT repeats span residues 127 to 164 (DSAA…QFGA) and 167 to 204 (IPSK…WTGD). Disordered regions lie at residues 233–274 (PPKQ…SDDQ), 507–608 (AKAP…SGAL), and 619–638 (ELDD…RYEH). The segment covering 239–253 (FLKSQQPTSEPNVET) has biased composition (polar residues). Residues 262–274 (ENEESEPEPSDDQ) show a composition bias toward acidic residues. A compositionally biased stretch (basic residues) spans 509–518 (APTKKSKVKP). Composition is skewed to low complexity over residues 526 to 551 (VVVP…SPRK) and 582 to 595 (SRGL…SLQQ). Ser-543 and Ser-548 each carry phosphoserine. Residues 597-608 (VKASTPLNSGAL) are compositionally biased toward polar residues. Residues 637-697 (EHPKVLEDND…NTLRSARKAS (61 aa)) are a coiled coil. A phosphoserine mark is found at Ser-697 and Ser-720.

Belongs to the TOG/XMAP215 family. As to quaternary structure, interacts with alp14.

Its subcellular location is the cytoplasm. The protein resides in the cytoskeleton. It is found in the microtubule organizing center. It localises to the spindle pole body. The protein localises to the chromosome. Its subcellular location is the centromere. The protein resides in the kinetochore. Functionally, required for bipolar spindle formation and proper chromosome segregation. Has a role in connecting the kinetochores and the plus end of pole to chromosome microtubules. Also required for the activation of the spindle checkpoint pathway. The protein is Spindle pole body component alp14 (alp14) of Schizosaccharomyces pombe (strain 972 / ATCC 24843) (Fission yeast).